Reading from the N-terminus, the 299-residue chain is Peroxisomal biogenesis factor 19 (299 aa).

The segment at 1 to 61 is disordered; sequence MAAAEEGCGV…KRAPGDTAKD (61 aa). Ala-2 carries the N-acetylalanine modification. The interval 2-56 is docking to the peroxisome membrane and binding to PEX3; that stretch reads AAAEEGCGVGVEDDRELEELLESALDDFDKAKPSPEHAPTISAPDASGPQKRAPG. Residues 2 to 91 form a necessary for PEX19 function on peroxisome biogenesis region; it reads AAAEEGCGVG…QATAEFEKAM (90 aa). The segment covering 12-27 has biased composition (acidic residues); it reads VEDDRELEELLESALD. Phosphoserine occurs at positions 35 and 66. Phosphothreonine is present on Thr-236. Residue Cys-296 is modified to Cysteine methyl ester. Cys-296 carries S-farnesyl cysteine lipidation. The propeptide at 297 to 299 is removed in mature form; it reads LIM.

This sequence belongs to the peroxin-19 family. In terms of assembly, interacts with a broad range of peroxisomal membrane proteins, including PEX3, PEX10, PEX11A, PEX11B, PEX12, PEX13, PEX14 and PEX16, PXMP2/PMP22, PXMP4/PMP24, SLC25A17/PMP34, ABCD1/ALDP, ABCD2/ALDRP, and ABCD3/PMP70. Also interacts with the tumor suppressor CDKN2A/p19ARF.

It is found in the cytoplasm. The protein resides in the peroxisome membrane. Necessary for early peroxisomal biogenesis. Acts both as a cytosolic chaperone and as an import receptor for peroxisomal membrane proteins (PMPs). Binds and stabilizes newly synthesized PMPs in the cytoplasm by interacting with their hydrophobic membrane-spanning domains, and targets them to the peroxisome membrane by binding to the integral membrane protein PEX3. Excludes CDKN2A from the nucleus and prevents its interaction with MDM2, which results in active degradation of TP53. In Mus musculus (Mouse), this protein is Peroxisomal biogenesis factor 19 (Pex19).